The primary structure comprises 53 residues: Metallocarboxypeptidase inhibitor (53 aa).

3 cysteine pairs are disulfide-bonded: C9-C23, C15-C51, and C27-C38. Residue A53 participates in Zn(2+) binding.

In terms of assembly, monomer. Interacts (via C-terminus) with human CPA4.

In terms of biological role, metallocarboxypeptidase inhibitor. Has an inhibitory effect on bovine CPA1 and CPB2, human CPA1, CPA2, CPA4, CPB1 and CPB2, and porcine CPB1. Does not inhibit D.melanogaster svr (carboxypeptidase D). Shows no activity against serine proteases subtilisin or bovine trypsin, cysteine protease papain, and aspartyl protease porcine pepsin. This chain is Metallocarboxypeptidase inhibitor, found in Nerita versicolor (Four-tooth nerite).